A 437-amino-acid chain; its full sequence is Nicotinate phosphoribosyltransferase (437 aa).

Position 231 is a phosphohistidine; by autocatalysis (His-231).

Belongs to the NAPRTase family. Post-translationally, transiently phosphorylated on a His residue during the reaction cycle. Phosphorylation strongly increases the affinity for substrates and increases the rate of nicotinate D-ribonucleotide production. Dephosphorylation regenerates the low-affinity form of the enzyme, leading to product release.

The enzyme catalyses nicotinate + 5-phospho-alpha-D-ribose 1-diphosphate + ATP + H2O = nicotinate beta-D-ribonucleotide + ADP + phosphate + diphosphate. Its pathway is cofactor biosynthesis; NAD(+) biosynthesis; nicotinate D-ribonucleotide from nicotinate: step 1/1. Functionally, catalyzes the synthesis of beta-nicotinate D-ribonucleotide from nicotinate and 5-phospho-D-ribose 1-phosphate at the expense of ATP. The protein is Nicotinate phosphoribosyltransferase of Vibrio vulnificus (strain YJ016).